The following is a 785-amino-acid chain: uncharacterized protein (785 aa).

The DOD-type homing endonuclease domain maps to Leu293–Phe421.

This protein undergoes a protein self splicing that involves a post-translational excision of the intervening region (intein) followed by peptide ligation.

This is an uncharacterized protein from Methanocaldococcus jannaschii (strain ATCC 43067 / DSM 2661 / JAL-1 / JCM 10045 / NBRC 100440) (Methanococcus jannaschii).